A 37-amino-acid chain; its full sequence is MKVRPSVKPICEKCKVIKRKGRVMVICENPKHKQKQG.

Belongs to the bacterial ribosomal protein bL36 family.

This is Large ribosomal subunit protein bL36 from Clostridium perfringens (strain ATCC 13124 / DSM 756 / JCM 1290 / NCIMB 6125 / NCTC 8237 / Type A).